The sequence spans 385 residues: Probable caffeine synthase MTL2 (385 aa).

8 residues coordinate S-adenosyl-L-homocysteine: Tyr18, Cys62, Asn67, Asp101, Leu102, Ser140, Phe141, and Cys157. Residues Tyr158, His161, and Trp162 each contribute to the caffeine site. Asn179 serves as a coordination point for Mg(2+). A caffeine-binding site is contributed by Thr238. Positions 261, 263, and 264 each coordinate Mg(2+). Tyr369 is a caffeine binding site.

This sequence belongs to the methyltransferase superfamily. Type-7 methyltransferase family. The cofactor is Mg(2+).

It participates in alkaloid biosynthesis. Its function is as follows. May be involved in the biosynthesis of caffeine. This Coffea canephora (Robusta coffee) protein is Probable caffeine synthase MTL2.